A 527-amino-acid polypeptide reads, in one-letter code: MASSMGRFLLFFIALRGFLLEASGDFGSGASRDDDVLLPYSRARARLARDCTRVHAGRLEHHESWPPAAQTAGAHRPSVRTFVSYFADRAVPGHLTRAPEPLRTFSVLEPGGPGGCASKRRATVEETARPSGCTVAQNGGFFRMETGECLGNVVSGGRRVSSAGGLQNAQFGIRRDGTLVTGYLSEEEVLDTENPFVQLLSGVVWLIRNGSIYINESQAAECEETQETGSFNRFVNVISARTAVGHDRKGQLVLLHVDGQTEQRGINLWEMAEFLLKQDVVNAINLDGGGSATFVLNGTLASYPSDHCQDNMWRCPRRVSTVVCVHEPRCQPPDCSGHGTCMEGRCQCTGHFWRGAACDKLDCGPANCSQHGLCTETGCRCEAGWTGSNCSEECPLGWYGPGCQSPCKCEHQCPCDPQTGNCSVNWSPTLSSLFSRVKECFPPPEVTVQAEELSLLTRTTWLAITLALAFLLLISTAANVSLFLGSRAARRRHLDGAYVYHPLQEVNGEHPAAEKEQLGDSSNPFKD.

The N-terminal stretch at 1 to 25 (MASSMGRFLLFFIALRGFLLEASGD) is a signal peptide. The propeptide at 26–49 (FGSGASRDDDVLLPYSRARARLAR) is removed in mature form. Residues 50–463 (DCTRVHAGRL…SLLTRTTWLA (414 aa)) lie on the Lumenal side of the membrane. 5 disulfides stabilise this stretch: Cys116/Cys149, Cys133/Cys324, Cys308/Cys315, Cys363/Cys374, and Cys381/Cys390. N-linked (GlcNAc...) asparagine glycosylation is found at Asn209, Asn215, and Asn297. One can recognise an EGF-like domain in the interval 359 to 391 (DKLDCGPANCSQHGLCTETGCRCEAGWTGSNCS). Residues Asn367, Asn389, and Asn421 are each glycosylated (N-linked (GlcNAc...) asparagine). The chain crosses the membrane as a helical span at residues 464 to 484 (ITLALAFLLLISTAANVSLFL). The Cytoplasmic segment spans residues 485–527 (GSRAARRRHLDGAYVYHPLQEVNGEHPAAEKEQLGDSSNPFKD). Positions 498 to 505 (YVYHPLQE) are mediates the interaction with AP4M1. The Tyrosine-based internalization motif signature appears at 500-503 (YHPL). An NPF internalization motif motif is present at residues 523–527 (NPFKD).

Homotetramer arranged as two disulfide-linked homodimers. Interacts with AP4M1. Glycosylated. Contains complex N-linked oligosaccharides with appreciable amounts of sialic acid. Post-translationally, the precursor is cleaved and activated in the trans-Golgi network by a furin endopeptidase.

It localises to the golgi apparatus. The protein localises to the golgi stack membrane. It is found in the trans-Golgi network. The catalysed reaction is N(4)-[6-(N-acetyl-alpha-D-glucosaminyl-1-phospho)-alpha-D-mannosyl-(1-&gt;2)-alpha-D-mannosyl-(glycan)]-L-asparaginyl-[protein] + H2O = N(4)-[6-phospho-alpha-D-mannosyl-(1-&gt;2)-alpha-D-mannosyl-(glycan)]-L-asparaginyl-[protein] + N-acetyl-D-glucosamine + H(+). It functions in the pathway protein modification; protein glycosylation. Its function is as follows. Catalyzes the second step in the formation of the mannose 6-phosphate targeting signal on lysosomal enzyme oligosaccharides by removing GlcNAc residues from GlcNAc-alpha-P-mannose moieties, which are formed in the first step. Also hydrolyzes UDP-GlcNAc, a sugar donor for Golgi N-acetylglucosaminyltransferases. The protein is N-acetylglucosamine-1-phosphodiester alpha-N-acetylglucosaminidase (NAGPA) of Bos taurus (Bovine).